The sequence spans 339 residues: Dihydroorotase (339 aa).

Zn(2+) contacts are provided by histidine 12 and histidine 14. Substrate contacts are provided by residues 14–16 and asparagine 40; that span reads HVR. 4 residues coordinate Zn(2+): lysine 94, histidine 133, histidine 167, and aspartate 239. Lysine 94 bears the N6-carboxylysine mark. A substrate-binding site is contributed by histidine 133. Residue aspartate 239 is part of the active site. Substrate-binding residues include histidine 243 and alanine 255.

This sequence belongs to the metallo-dependent hydrolases superfamily. DHOase family. Class II DHOase subfamily. Homodimer. It depends on Zn(2+) as a cofactor.

The catalysed reaction is (S)-dihydroorotate + H2O = N-carbamoyl-L-aspartate + H(+). It participates in pyrimidine metabolism; UMP biosynthesis via de novo pathway; (S)-dihydroorotate from bicarbonate: step 3/3. Functionally, catalyzes the reversible cyclization of carbamoyl aspartate to dihydroorotate. The sequence is that of Dihydroorotase from Helicobacter pylori (strain HPAG1).